A 306-amino-acid polypeptide reads, in one-letter code: Beta-lactamase (306 aa).

Positions 1–34 (MDRTTARPNRRAVLATGVGAALAATAAAAGPAHA) form a signal peptide, tat-type signal. The active-site Acyl-ester intermediate is the Ser-82. 250–252 (KTG) contributes to the substrate binding site.

Belongs to the class-A beta-lactamase family. Post-translationally, predicted to be exported by the Tat system. The position of the signal peptide cleavage has not been experimentally proven.

The catalysed reaction is a beta-lactam + H2O = a substituted beta-amino acid. The protein is Beta-lactamase (blaF) of Streptomyces fradiae (Streptomyces roseoflavus).